Consider the following 430-residue polypeptide: Enolase (430 aa).

Residue glutamine 165 participates in (2R)-2-phosphoglycerate binding. Catalysis depends on glutamate 207, which acts as the Proton donor. Residues aspartate 244, glutamate 287, and aspartate 314 each coordinate Mg(2+). 4 residues coordinate (2R)-2-phosphoglycerate: lysine 339, arginine 368, serine 369, and lysine 390. Lysine 339 serves as the catalytic Proton acceptor.

It belongs to the enolase family. As to quaternary structure, component of the RNA degradosome, a multiprotein complex involved in RNA processing and mRNA degradation. It depends on Mg(2+) as a cofactor.

The protein localises to the cytoplasm. Its subcellular location is the secreted. It is found in the cell surface. The enzyme catalyses (2R)-2-phosphoglycerate = phosphoenolpyruvate + H2O. The protein operates within carbohydrate degradation; glycolysis; pyruvate from D-glyceraldehyde 3-phosphate: step 4/5. Catalyzes the reversible conversion of 2-phosphoglycerate (2-PG) into phosphoenolpyruvate (PEP). It is essential for the degradation of carbohydrates via glycolysis. In Xanthomonas euvesicatoria pv. vesicatoria (strain 85-10) (Xanthomonas campestris pv. vesicatoria), this protein is Enolase.